A 363-amino-acid polypeptide reads, in one-letter code: 3-isopropylmalate dehydrogenase (363 aa).

G79–E92 serves as a coordination point for NAD(+). The substrate site is built by R100, R110, R139, and D228. 3 residues coordinate Mg(2+): D228, D252, and D256. G286–N298 serves as a coordination point for NAD(+).

Belongs to the isocitrate and isopropylmalate dehydrogenases family. LeuB type 1 subfamily. Homodimer. Mg(2+) serves as cofactor. The cofactor is Mn(2+).

The protein resides in the cytoplasm. It catalyses the reaction (2R,3S)-3-isopropylmalate + NAD(+) = 4-methyl-2-oxopentanoate + CO2 + NADH. Its pathway is amino-acid biosynthesis; L-leucine biosynthesis; L-leucine from 3-methyl-2-oxobutanoate: step 3/4. Catalyzes the oxidation of 3-carboxy-2-hydroxy-4-methylpentanoate (3-isopropylmalate) to 3-carboxy-4-methyl-2-oxopentanoate. The product decarboxylates to 4-methyl-2 oxopentanoate. This is 3-isopropylmalate dehydrogenase from Vibrio vulnificus (strain CMCP6).